The primary structure comprises 483 residues: Endoplasmic reticulum lectin 1 (483 aa).

Positions 1-33 (MEEGDGGLRSLVPGGPLLLVLYGLLEASGGGRA) are cleaved as a signal peptide. MRH domains follow at residues 111-246 (SSCS…LCSH) and 342-469 (SYCF…ICKI). Cysteines 113 and 126 form a disulfide. N-linked (GlcNAc...) asparagine glycosylation occurs at Asn-195. Intrachain disulfides connect Cys-199-Cys-232, Cys-215-Cys-244, Cys-344-Cys-357, Cys-421-Cys-455, and Cys-436-Cys-467.

As to quaternary structure, may form a complex with OS9, HSPA5, SYVN1, and SEL1L with which it interacts directly. Interacts (via PRKCSH 2 domain) with KREMEN2 (when glycosylated). Interacts with HSPA5. Post-translationally, N-glycosylated.

It is found in the endoplasmic reticulum lumen. Probable lectin that binds selectively to improperly folded lumenal proteins. May function in endoplasmic reticulum quality control and endoplasmic reticulum-associated degradation (ERAD) of both non-glycosylated proteins and glycoproteins. In Mus musculus (Mouse), this protein is Endoplasmic reticulum lectin 1 (Erlec1).